The primary structure comprises 305 residues: tRNA dimethylallyltransferase (305 aa).

12–19 (GPTASGKT) lines the ATP pocket. 14–19 (TASGKT) is a binding site for substrate. Interaction with substrate tRNA stretches follow at residues 37-40 (DSAL), 161-165 (QRLAR), and 242-247 (RCVGYR).

It belongs to the IPP transferase family. Monomer. Mg(2+) is required as a cofactor.

It carries out the reaction adenosine(37) in tRNA + dimethylallyl diphosphate = N(6)-dimethylallyladenosine(37) in tRNA + diphosphate. In terms of biological role, catalyzes the transfer of a dimethylallyl group onto the adenine at position 37 in tRNAs that read codons beginning with uridine, leading to the formation of N6-(dimethylallyl)adenosine (i(6)A). In Psychromonas ingrahamii (strain DSM 17664 / CCUG 51855 / 37), this protein is tRNA dimethylallyltransferase.